Reading from the N-terminus, the 211-residue chain is Thymidylate kinase (211 aa).

11 to 18 (GPDGAGKT) contacts ATP.

Belongs to the thymidylate kinase family.

The catalysed reaction is dTMP + ATP = dTDP + ADP. Phosphorylation of dTMP to form dTDP in both de novo and salvage pathways of dTTP synthesis. The chain is Thymidylate kinase from Streptococcus pyogenes serotype M49 (strain NZ131).